The sequence spans 459 residues: 5-hydroxytryptamine receptor 2C (459 aa).

A signal peptide spans 1 to 32 (MVNLGTAVRSLLVHLIGLLVWQFDISISPVAA). Residues 33-56 (IVTDTFNSSDGGRLFQFPDGVQNW) are Extracellular-facing. A helical transmembrane segment spans residues 57–81 (PALSIVVIIIMTIGGNILVIMAVSM). The Cytoplasmic portion of the chain corresponds to 82–87 (EKKLHN). A helical transmembrane segment spans residues 88–112 (ATNYFLMSLAIADMLVGLLVMPLSL). At 113–129 (LAILYDYVWPLPRYLCP) the chain is on the extracellular side. Residues cysteine 128 and cysteine 208 are joined by a disulfide bond. Residues 130–152 (VWISLDVLFSTASIMHLCAISLD) form a helical membrane-spanning segment. Threonine 140 lines the ergotamine pocket. The short motif at 152–154 (DRY) is the DRY motif; important for ligand-induced conformation changes element. Over 153-168 (RYVAIRNPIEHSRFNS) the chain is Cytoplasmic. The helical transmembrane segment at 169 to 190 (RTKAIMKIAIVWAISIGVSVPI) threads the bilayer. The Extracellular segment spans residues 191–214 (PVIGLRDESKVFVNNTTCVLNDPN). Asparagine 204 and asparagine 205 each carry an N-linked (GlcNAc...) asparagine glycan. Leucine 210 lines the ergotamine pocket. A helical transmembrane segment spans residues 215-237 (FVLIGSFVAFFIPLTIMVITYFL). Over 238–312 (TIYVLRRQTL…AINNEKKASK (75 aa)) the chain is Cytoplasmic. Residues 274–302 (DEEENAPNPNPDQKPRRKKKEKRPRGTMQ) form a disordered region. Basic residues predominate over residues 288 to 298 (PRRKKKEKRPR). Residues 313 to 337 (VLGIVFFVFLIMWCPFFITNILSVL) form a helical membrane-spanning segment. An intrachain disulfide couples cysteine 338 to cysteine 342. Over 338–348 (CGKACNQKLME) the chain is Extracellular. Residues 349–371 (KLLNVFVWIGYVCSGINPLVYTL) traverse the membrane as a helical segment. Residues 365–369 (NPLVY) carry the NPxxY motif; important for ligand-induced conformation changes and signaling motif. At 372-459 (FNKIYRRAFS…NVVSERISSV (88 aa)) the chain is on the cytoplasmic side. Residues 457-459 (SSV) carry the PDZ-binding motif.

Belongs to the G-protein coupled receptor 1 family. Interacts with MPDZ. Interacts with ARRB2. Interacts with MPP3; this interaction stabilizes the receptor at the plasma membrane and prevents the desensitization of the HTR2C receptor-mediated calcium response. As to expression, detected in brain cortex, hypothalamus, brainstem and arcuate nucleus. Detected in the paraventricular nucleus of the hypothalamus.

It is found in the cell membrane. Its function is as follows. G-protein coupled receptor for 5-hydroxytryptamine (serotonin). Also functions as a receptor for various drugs and psychoactive substances, including ergot alkaloid derivatives, 1-2,5,-dimethoxy-4-iodophenyl-2-aminopropane (DOI) and lysergic acid diethylamide (LSD). Ligand binding causes a conformation change that triggers signaling via guanine nucleotide-binding proteins (G proteins) and modulates the activity of downstream effectors. HTR2C is coupled to G(q)/G(11) G alpha proteins and activates phospholipase C-beta, releasing diacylglycerol (DAG) and inositol 1,4,5-trisphosphate (IP3) second messengers that modulate the activity of phosphatidylinositol 3-kinase and promote the release of Ca(2+) ions from intracellular stores, respectively. Beta-arrestin family members inhibit signaling via G proteins and mediate activation of alternative signaling pathways. Regulates neuronal activity via the activation of short transient receptor potential calcium channels in the brain, and thereby modulates the activation of pro-opiomelanocortin neurons and the release of CRH that then regulates the release of corticosterone. Plays a role in the regulation of appetite and eating behavior, responses to anxiogenic stimuli and stress. Plays a role in insulin sensitivity and glucose homeostasis. The polypeptide is 5-hydroxytryptamine receptor 2C (Mus musculus (Mouse)).